The following is a 358-amino-acid chain: Leukotriene B4 receptor 2 (358 aa).

At 1–24 (MSVCYRPPGNETLLSWKGSRATGT) the chain is on the extracellular side. Asn-10 is a glycosylation site (N-linked (GlcNAc...) asparagine). Residues 25–45 (AFLLLAALLGLPGNGFVVWSL) traverse the membrane as a helical segment. The Cytoplasmic segment spans residues 46–60 (AGWRPTAGRPLAATL). The helical transmembrane segment at 61 to 81 (VLHLALADGAVLLLTPLFVAF) threads the bilayer. Residues 82–96 (LSRQAWPLGQVGCKA) lie on the Extracellular side of the membrane. The helical transmembrane segment at 97–117 (VYYVCALSMYASVLLTGLLSL) threads the bilayer. At 118–140 (QRCLAVTRPFLAPRLRSPALARR) the chain is on the cytoplasmic side. Residues 141–161 (LLLGVWLAALVLAVPAAVYRH) form a helical membrane-spanning segment. Residues 162 to 185 (LWGDRVCQLCHPSAVHAAAHLSLE) are Extracellular-facing. Residues 186–206 (TLTAFVLPFGTVLGCYGVTLA) traverse the membrane as a helical segment. Over 207–225 (RLRGARWGSGRQGTRVGRL) the chain is Cytoplasmic. Residues 226–246 (VSAIVLAFGLLWAPYHAVNLL) form a helical membrane-spanning segment. Residues 247–275 (QAVAALAPPEGPLARLGGAGQAARAGTTA) are Extracellular-facing. A helical membrane pass occupies residues 276–296 (LAFFSSSVNPVLYVFTAGDLL). The Cytoplasmic portion of the chain corresponds to 297–358 (PRAGPRFLTR…GRMEKDSQEW (62 aa)). Residues 315–358 (RVGSRSREGTMELRTTPRLKVVGQGRGYGDPGGGGRMEKDSQEW) are disordered. Residues 338–349 (QGRGYGDPGGGG) are compositionally biased toward gly residues.

This sequence belongs to the G-protein coupled receptor 1 family.

The protein resides in the cell membrane. Its function is as follows. Low-affinity receptor for leukotrienes including leukotriene B4. Mediates chemotaxis of granulocytes and macrophages. The response is mediated via G-proteins that activate a phosphatidylinositol-calcium second messenger system. The sequence is that of Leukotriene B4 receptor 2 (Ltb4r2) from Rattus norvegicus (Rat).